Here is a 207-residue protein sequence, read N- to C-terminus: SPRY domain-containing protein 4 (207 aa).

One can recognise a B30.2/SPRY domain in the interval 12-206 (CRWGAKRLGV…THSGLEVPEG (195 aa)). Lysine 53 and lysine 130 each carry N6-acetyllysine. Lysine 139 is modified (N6-succinyllysine).

The polypeptide is SPRY domain-containing protein 4 (SPRYD4) (Homo sapiens (Human)).